Consider the following 97-residue polypeptide: MEIKKTAMAGTLESSDVQIMLSQGRDGITFDLVSDVAKQFDDAIKATITAVLALYGVDNAEVKVVDKGALDMVIKARAMTAVQRALDLADEPNWEVM.

Serine 14 carries the O-(phosphoribosyl dephospho-coenzyme A)serine modification.

This sequence belongs to the CitD family. Oligomer with a subunit composition of (alpha,beta,gamma)6.

The protein localises to the cytoplasm. Its function is as follows. Covalent carrier of the coenzyme of citrate lyase. In Leuconostoc citreum (strain KM20), this protein is Citrate lyase acyl carrier protein.